Reading from the N-terminus, the 305-residue chain is Undecaprenyl-diphosphatase (305 aa).

8 helical membrane passes run 18–38 (GVTE…PALV), 55–75 (YLAF…VFFW), 103–123 (WLIV…EQLF), 130–150 (PVPA…GEVL), 187–207 (GVLI…RSGI), 225–245 (FSFL…IPEL), 246–266 (FGPL…ASFV), and 284–304 (LTPF…WLAL).

Belongs to the UppP family.

It is found in the cell membrane. It carries out the reaction di-trans,octa-cis-undecaprenyl diphosphate + H2O = di-trans,octa-cis-undecaprenyl phosphate + phosphate + H(+). Its function is as follows. Catalyzes the dephosphorylation of undecaprenyl diphosphate (UPP). Confers resistance to bacitracin. This is Undecaprenyl-diphosphatase from Mycobacterium avium (strain 104).